Consider the following 605-residue polypeptide: UvrABC system protein C (605 aa).

The region spanning 14–92 (QSCGVYKMVG…IKSLKPLYNI (79 aa)) is the GIY-YIG domain. One can recognise a UVR domain in the interval 202 to 237 (KEVKEQLLFTMRKCSSEENYELAAIYRDRVKFLEQI).

This sequence belongs to the UvrC family. In terms of assembly, interacts with UvrB in an incision complex.

The protein resides in the cytoplasm. Functionally, the UvrABC repair system catalyzes the recognition and processing of DNA lesions. UvrC both incises the 5' and 3' sides of the lesion. The N-terminal half is responsible for the 3' incision and the C-terminal half is responsible for the 5' incision. The sequence is that of UvrABC system protein C from Wolbachia pipientis wMel.